We begin with the raw amino-acid sequence, 269 residues long: Glutamate 5-kinase 2 (269 aa).

An ATP-binding site is contributed by Lys16. Substrate is bound by residues Ser57, Asp144, and Asn156. 218–224 serves as a coordination point for ATP; it reads SGGMISK.

The protein belongs to the glutamate 5-kinase family.

The protein localises to the cytoplasm. The enzyme catalyses L-glutamate + ATP = L-glutamyl 5-phosphate + ADP. It functions in the pathway amino-acid biosynthesis; L-proline biosynthesis; L-glutamate 5-semialdehyde from L-glutamate: step 1/2. Functionally, catalyzes the transfer of a phosphate group to glutamate to form L-glutamate 5-phosphate. This is Glutamate 5-kinase 2 from Rhizobium meliloti (strain 1021) (Ensifer meliloti).